The following is a 554-amino-acid chain: 2-succinyl-5-enolpyruvyl-6-hydroxy-3-cyclohexene-1-carboxylate synthase (554 aa).

It belongs to the TPP enzyme family. MenD subfamily. As to quaternary structure, homodimer. The cofactor is Mg(2+). It depends on Mn(2+) as a cofactor. Thiamine diphosphate is required as a cofactor.

The enzyme catalyses isochorismate + 2-oxoglutarate + H(+) = 5-enolpyruvoyl-6-hydroxy-2-succinyl-cyclohex-3-ene-1-carboxylate + CO2. The protein operates within quinol/quinone metabolism; 1,4-dihydroxy-2-naphthoate biosynthesis; 1,4-dihydroxy-2-naphthoate from chorismate: step 2/7. It participates in quinol/quinone metabolism; menaquinone biosynthesis. In terms of biological role, catalyzes the thiamine diphosphate-dependent decarboxylation of 2-oxoglutarate and the subsequent addition of the resulting succinic semialdehyde-thiamine pyrophosphate anion to isochorismate to yield 2-succinyl-5-enolpyruvyl-6-hydroxy-3-cyclohexene-1-carboxylate (SEPHCHC). This Flavobacterium johnsoniae (strain ATCC 17061 / DSM 2064 / JCM 8514 / BCRC 14874 / CCUG 350202 / NBRC 14942 / NCIMB 11054 / UW101) (Cytophaga johnsonae) protein is 2-succinyl-5-enolpyruvyl-6-hydroxy-3-cyclohexene-1-carboxylate synthase.